The following is a 555-amino-acid chain: Glutamate--tRNA ligase (555 aa).

The 'HIGH' region signature appears at 100-110 (PNPSGPLHIGH).

The protein belongs to the class-I aminoacyl-tRNA synthetase family. Glutamate--tRNA ligase type 2 subfamily.

It localises to the cytoplasm. It carries out the reaction tRNA(Glu) + L-glutamate + ATP = L-glutamyl-tRNA(Glu) + AMP + diphosphate. Functionally, catalyzes the attachment of glutamate to tRNA(Glu) in a two-step reaction: glutamate is first activated by ATP to form Glu-AMP and then transferred to the acceptor end of tRNA(Glu). The polypeptide is Glutamate--tRNA ligase (Methanococcus maripaludis (strain C6 / ATCC BAA-1332)).